Consider the following 359-residue polypeptide: GTP 3',8-cyclase (359 aa).

The Radical SAM core domain occupies 33-260; sequence RFGRRHDSLR…PTGRENPSAP (228 aa). Residue Arg-42 coordinates GTP. Positions 49 and 53 each coordinate [4Fe-4S] cluster. Tyr-55 provides a ligand contact to S-adenosyl-L-methionine. Cys-56 serves as a coordination point for [4Fe-4S] cluster. Arg-93 is a GTP binding site. Position 97 (Gly-97) interacts with S-adenosyl-L-methionine. Residue Thr-124 participates in GTP binding. An S-adenosyl-L-methionine-binding site is contributed by Ser-148. Lys-185 is a GTP binding site. Met-219 provides a ligand contact to S-adenosyl-L-methionine. Positions 286 and 289 each coordinate [4Fe-4S] cluster. 291 to 293 serves as a coordination point for GTP; the sequence is RLR. Cys-303 is a [4Fe-4S] cluster binding site.

This sequence belongs to the radical SAM superfamily. MoaA family. As to quaternary structure, monomer and homodimer. It depends on [4Fe-4S] cluster as a cofactor.

It carries out the reaction GTP + AH2 + S-adenosyl-L-methionine = (8S)-3',8-cyclo-7,8-dihydroguanosine 5'-triphosphate + 5'-deoxyadenosine + L-methionine + A + H(+). Its pathway is cofactor biosynthesis; molybdopterin biosynthesis. In terms of biological role, catalyzes the cyclization of GTP to (8S)-3',8-cyclo-7,8-dihydroguanosine 5'-triphosphate. The polypeptide is GTP 3',8-cyclase (Rhodopirellula baltica (strain DSM 10527 / NCIMB 13988 / SH1)).